Here is a 268-residue protein sequence, read N- to C-terminus: MEMO1 family protein Ta0237 (268 aa).

It belongs to the MEMO1 family.

This chain is MEMO1 family protein Ta0237, found in Thermoplasma acidophilum (strain ATCC 25905 / DSM 1728 / JCM 9062 / NBRC 15155 / AMRC-C165).